The sequence spans 76 residues: UPF0291 protein BC_1827 (76 aa).

It belongs to the UPF0291 family.

The protein resides in the cytoplasm. The polypeptide is UPF0291 protein BC_1827 (Bacillus cereus (strain ATCC 14579 / DSM 31 / CCUG 7414 / JCM 2152 / NBRC 15305 / NCIMB 9373 / NCTC 2599 / NRRL B-3711)).